Here is a 179-residue protein sequence, read N- to C-terminus: Hypoxanthine-guanine phosphoribosyltransferase (179 aa).

Diphosphate contacts are provided by Lys-42 and Gly-43. Mg(2+)-binding residues include Glu-98 and Asp-99. The active-site Proton acceptor is Glu-102. GMP-binding positions include Lys-130, 151 to 152, and Asp-158; that span reads FV. Position 164 (Arg-164) interacts with diphosphate.

It belongs to the purine/pyrimidine phosphoribosyltransferase family. Mg(2+) is required as a cofactor.

The protein localises to the cytoplasm. The catalysed reaction is IMP + diphosphate = hypoxanthine + 5-phospho-alpha-D-ribose 1-diphosphate. It catalyses the reaction GMP + diphosphate = guanine + 5-phospho-alpha-D-ribose 1-diphosphate. The protein operates within purine metabolism; IMP biosynthesis via salvage pathway; IMP from hypoxanthine: step 1/1. Its pathway is purine metabolism; GMP biosynthesis via salvage pathway; GMP from guanine: step 1/1. Its function is as follows. Purine salvage pathway enzyme that catalyzes the transfer of the ribosyl-5-phosphate group from 5-phospho-alpha-D-ribose 1-diphosphate (PRPP) to the N9 position of the 6-oxopurines hypoxanthine and guanine to form the corresponding ribonucleotides IMP (inosine 5'-monophosphate) and GMP (guanosine 5'-monophosphate), with the release of PPi. The chain is Hypoxanthine-guanine phosphoribosyltransferase (hpt) from Staphylococcus epidermidis (strain ATCC 35984 / DSM 28319 / BCRC 17069 / CCUG 31568 / BM 3577 / RP62A).